The primary structure comprises 364 residues: Isoflavone 4'-O-methyltransferase (364 aa).

Residues 206-209 (VGGG), D230, 230-231 (DQ), 250-251 (DM), and K264 contribute to the S-adenosyl-L-methionine site. H268 acts as the Proton acceptor in catalysis.

This sequence belongs to the class I-like SAM-binding methyltransferase superfamily. Cation-independent O-methyltransferase family. COMT subfamily. Homodimer.

The catalysed reaction is a 4'-hydroxyisoflavone + S-adenosyl-L-methionine = a 4'-methoxyisoflavone + S-adenosyl-L-homocysteine + H(+). The enzyme catalyses (2R,3S)-2,4',7-trihydroxyisoflavanone + S-adenosyl-L-methionine = (2R,3S)-2,7-dihydroxy-4'-methoxyisoflavanone + S-adenosyl-L-homocysteine + H(+). In terms of biological role, 2-hydroxyisoflavanone 4'-O-methyltransferase involved in the biosynthesis of the phytoalexin medicarpin. Has also an in vitro (+)-6a-hydroxymaackiain-3-0-methyltransferase activity, converting the pterocarpan 6a-hydroxymaackiain into pisatin. No activity with di- or trihydroxylated isoflavones, including daidzein and genistein, or with (-)-medicarpin and maackiain. The dual activity for either 3- or 4'-O-methylation depends upon substrate availability. The protein is Isoflavone 4'-O-methyltransferase (HI4'OMT) of Medicago truncatula (Barrel medic).